The sequence spans 183 residues: Dual-action ribosomal maturation protein DarP (183 aa).

The protein belongs to the DarP family.

It localises to the cytoplasm. Its function is as follows. Member of a network of 50S ribosomal subunit biogenesis factors which assembles along the 30S-50S interface, preventing incorrect 23S rRNA structures from forming. Promotes peptidyl transferase center (PTC) maturation. This chain is Dual-action ribosomal maturation protein DarP, found in Salmonella enteritidis PT4 (strain P125109).